The following is a 909-amino-acid chain: Protein translocase subunit SecA (909 aa).

ATP is bound by residues Gln-87, 105–109 (GEGKT), and Asp-507. Disordered stretches follow at residues 567-586 (RRIDNQLRGRSGRQGDPGSS) and 859-909 (YSEA…GKLD). The span at 865–889 (EHQSVTEGHEAKQQPFVRKSDKIGR) shows a compositional bias: basic and acidic residues. Cys-893, Cys-895, Cys-904, and His-905 together coordinate Zn(2+). Residues 899-909 (RKYKQCHGKLD) show a composition bias toward basic residues.

This sequence belongs to the SecA family. As to quaternary structure, monomer and homodimer. Part of the essential Sec protein translocation apparatus which comprises SecA, SecYEG and auxiliary proteins SecDF-YajC and YidC. Zn(2+) serves as cofactor.

It localises to the cell inner membrane. The protein resides in the cytoplasm. The catalysed reaction is ATP + H2O + cellular proteinSide 1 = ADP + phosphate + cellular proteinSide 2.. Functionally, part of the Sec protein translocase complex. Interacts with the SecYEG preprotein conducting channel. Has a central role in coupling the hydrolysis of ATP to the transfer of proteins into and across the cell membrane, serving both as a receptor for the preprotein-SecB complex and as an ATP-driven molecular motor driving the stepwise translocation of polypeptide chains across the membrane. This is Protein translocase subunit SecA from Nitrosomonas eutropha (strain DSM 101675 / C91 / Nm57).